Consider the following 184-residue polypeptide: Threonylcarbamoyl-AMP synthase (184 aa).

A YrdC-like domain is found at M1–G184.

It belongs to the SUA5 family. TsaC subfamily.

The protein resides in the cytoplasm. It catalyses the reaction L-threonine + hydrogencarbonate + ATP = L-threonylcarbamoyladenylate + diphosphate + H2O. Its function is as follows. Required for the formation of a threonylcarbamoyl group on adenosine at position 37 (t(6)A37) in tRNAs that read codons beginning with adenine. Catalyzes the conversion of L-threonine, HCO(3)(-)/CO(2) and ATP to give threonylcarbamoyl-AMP (TC-AMP) as the acyladenylate intermediate, with the release of diphosphate. This chain is Threonylcarbamoyl-AMP synthase, found in Haemophilus ducreyi (strain 35000HP / ATCC 700724).